A 508-amino-acid polypeptide reads, in one-letter code: Probable polyol transporter 3 (508 aa).

12 helical membrane-spanning segments follow: residues F21 to G41, Q60 to G80, Y90 to P110, C120 to I140, G147 to S167, L178 to I198, I280 to V300, L318 to F338, L348 to T368, I384 to V404, G418 to L438, and G448 to L468.

It belongs to the major facilitator superfamily. Sugar transporter (TC 2.A.1.1) family.

The protein localises to the membrane. In terms of biological role, plasma membrane sugar-proton symporter. In Arabidopsis thaliana (Mouse-ear cress), this protein is Probable polyol transporter 3 (PLT3).